The sequence spans 116 residues: UPF0482 protein PC1_2049 (116 aa).

A signal peptide spans 1 to 31 (MNHYSFSSLIRAFIPLSLVIVSAAWQPAALA).

The protein belongs to the UPF0482 family.

This Pectobacterium carotovorum subsp. carotovorum (strain PC1) protein is UPF0482 protein PC1_2049.